Reading from the N-terminus, the 737-residue chain is Transcription termination factor Rho (737 aa).

Residues 1–396 (MSGPCSAHRV…ENSYLPDPTD (396 aa)) are disordered. Composition is skewed to low complexity over residues 16–28 (RPTI…TRSS), 62–86 (ASRA…GSDA), and 101–111 (DAESAPTAADT). 4 stretches are compositionally biased toward basic and acidic residues: residues 145 to 175 (PRAE…HESR), 196 to 256 (SMER…DRRD), 266 to 279 (GRPD…DRHQ), and 286 to 324 (DRSH…DRGG). A compositionally biased stretch (basic residues) spans 328–339 (RNGRRGRNRFRR). Residues 347-360 (APISGSHAPSQGSP) show a composition bias toward polar residues. The 73-residue stretch at 367–439 (EGTMAGWFDP…IEVQTLNDGS (73 aa)) folds into the Rho RNA-BD domain. The segment covering 376–387 (PSRDGGFLRRPE) has biased composition (basic and acidic residues). Residues 487–492 (GYGQRA), 499–504 (RAGKTT), and Arg-530 contribute to the ATP site.

It belongs to the Rho family. Homohexamer. The homohexamer assembles into an open ring structure.

Functionally, facilitates transcription termination by a mechanism that involves Rho binding to the nascent RNA, activation of Rho's RNA-dependent ATPase activity, and release of the mRNA from the DNA template. This Gemmatimonas aurantiaca (strain DSM 14586 / JCM 11422 / NBRC 100505 / T-27) protein is Transcription termination factor Rho.